The primary structure comprises 379 residues: Cytochrome b (379 aa).

Transmembrane regions (helical) follow at residues 33 to 53, 77 to 98, 113 to 133, and 178 to 198; these read FGSL…FLAM, WMIR…FIHI, WNIG…GYVL, and FFAF…VHLL. Residues H83 and H97 each coordinate heme b. Heme b contacts are provided by H182 and H196. H201 serves as a coordination point for a ubiquinone. The next 4 helical transmembrane spans lie at 226–246, 288–308, 320–340, and 347–367; these read MKDI…VLFY, LGGV…PMMH, LSQC…WIGG, and FIMI…IIMP.

It belongs to the cytochrome b family. In terms of assembly, the cytochrome bc1 complex contains 11 subunits: 3 respiratory subunits (MT-CYB, CYC1 and UQCRFS1), 2 core proteins (UQCRC1 and UQCRC2) and 6 low-molecular weight proteins (UQCRH/QCR6, UQCRB/QCR7, UQCRQ/QCR8, UQCR10/QCR9, UQCR11/QCR10 and a cleavage product of UQCRFS1). This cytochrome bc1 complex then forms a dimer. The cofactor is heme b.

The protein resides in the mitochondrion inner membrane. Functionally, component of the ubiquinol-cytochrome c reductase complex (complex III or cytochrome b-c1 complex) that is part of the mitochondrial respiratory chain. The b-c1 complex mediates electron transfer from ubiquinol to cytochrome c. Contributes to the generation of a proton gradient across the mitochondrial membrane that is then used for ATP synthesis. The chain is Cytochrome b (MT-CYB) from Massoutiera mzabi (Mzab gundi).